A 468-amino-acid chain; its full sequence is 6-phospho-beta-galactosidase (468 aa).

5 residues coordinate D-galactose 6-phosphate: Gln-19, His-116, Asn-159, Glu-160, and Asn-297. The active-site Proton donor is the Glu-160. Catalysis depends on Glu-375, which acts as the Nucleophile. Ser-428, Trp-429, Lys-435, and Tyr-437 together coordinate D-galactose 6-phosphate.

Belongs to the glycosyl hydrolase 1 family.

It catalyses the reaction a 6-phospho-beta-D-galactoside + H2O = D-galactose 6-phosphate + an alcohol. The protein operates within carbohydrate metabolism; lactose degradation; D-galactose 6-phosphate and beta-D-glucose from lactose 6-phosphate: step 1/1. This Streptococcus pyogenes serotype M2 (strain MGAS10270) protein is 6-phospho-beta-galactosidase.